The following is a 430-amino-acid chain: Sorting nexin-30 (430 aa).

Residues methionine 1 to isoleucine 18 show a composition bias toward polar residues. A disordered region spans residues methionine 1–leucine 66. The segment covering serine 57–leucine 66 has biased composition (low complexity). The region spanning arginine 80 to lysine 201 is the PX domain. 4 residues coordinate a 1,2-diacyl-sn-glycero-3-phospho-(1D-myo-inositol-3-phosphate): arginine 123, glutamine 125, lysine 153, and arginine 167. The BAR domain maps to lysine 223 to glutamate 428.

The protein belongs to the sorting nexin family.

The protein localises to the early endosome membrane. Functionally, involved in the regulation of endocytosis and in several stages of intracellular trafficking. Together with snx4, involved in autophagosome assembly. The protein is Sorting nexin-30 (snx30) of Danio rerio (Zebrafish).